The primary structure comprises 148 residues: Large ribosomal subunit protein bL9 (148 aa).

The interval 46–65 (QLQQQNKHAEQEREQEIEDA) is disordered. Residues 52-65 (KHAEQEREQEIEDA) are compositionally biased toward basic and acidic residues.

It belongs to the bacterial ribosomal protein bL9 family.

Binds to the 23S rRNA. In Staphylococcus carnosus (strain TM300), this protein is Large ribosomal subunit protein bL9.